The chain runs to 614 residues: UvrABC system protein C (614 aa).

Positions 20–98 (TAPGVYRMYA…IKSLSPRYNV (79 aa)) constitute a GIY-YIG domain. One can recognise a UVR domain in the interval 207–242 (DELTRELGEQMQAASEALEFEQAARLRDLISSLRSM).

It belongs to the UvrC family. Interacts with UvrB in an incision complex.

It is found in the cytoplasm. In terms of biological role, the UvrABC repair system catalyzes the recognition and processing of DNA lesions. UvrC both incises the 5' and 3' sides of the lesion. The N-terminal half is responsible for the 3' incision and the C-terminal half is responsible for the 5' incision. The polypeptide is UvrABC system protein C (Stenotrophomonas maltophilia (strain R551-3)).